The following is a 432-amino-acid chain: D-amino acid dehydrogenase (432 aa).

An FAD-binding site is contributed by 3-17 (VVILGSGVVGVASAW).

Belongs to the DadA oxidoreductase family. The cofactor is FAD.

It carries out the reaction a D-alpha-amino acid + A + H2O = a 2-oxocarboxylate + AH2 + NH4(+). The protein operates within amino-acid degradation; D-alanine degradation; NH(3) and pyruvate from D-alanine: step 1/1. Functionally, oxidative deamination of D-amino acids. This is D-amino acid dehydrogenase from Escherichia coli O45:K1 (strain S88 / ExPEC).